A 285-amino-acid polypeptide reads, in one-letter code: Nucleotide-binding protein PFL_0912 (285 aa).

An ATP-binding site is contributed by 8 to 15; it reads GRSGSGKS. Position 60 to 63 (60 to 63) interacts with GTP; it reads DARN.

This sequence belongs to the RapZ-like family.

In terms of biological role, displays ATPase and GTPase activities. The polypeptide is Nucleotide-binding protein PFL_0912 (Pseudomonas fluorescens (strain ATCC BAA-477 / NRRL B-23932 / Pf-5)).